The sequence spans 260 residues: 5'-nucleotidase SurE (260 aa).

Asp-8, Asp-9, Ser-39, and Asn-93 together coordinate a divalent metal cation.

This sequence belongs to the SurE nucleotidase family. A divalent metal cation is required as a cofactor.

It localises to the cytoplasm. The catalysed reaction is a ribonucleoside 5'-phosphate + H2O = a ribonucleoside + phosphate. Its function is as follows. Nucleotidase that shows phosphatase activity on nucleoside 5'-monophosphates. This Thermofilum pendens (strain DSM 2475 / Hrk 5) protein is 5'-nucleotidase SurE.